A 402-amino-acid chain; its full sequence is Propionate kinase (402 aa).

Positions 11 and 18 each coordinate ATP. Asn-11 contacts Mg(2+). Residue Arg-86 coordinates substrate. Residue Asp-143 is the Proton donor/acceptor of the active site. Residues His-175, 203–207, 278–280, and 326–330 each bind ATP; these read HLGNG, DLR, and GIGEN.

It belongs to the acetokinase family. TdcD subfamily. In terms of assembly, homodimer. The cofactor is Mg(2+).

The enzyme catalyses propanoate + ATP = propanoyl phosphate + ADP. It functions in the pathway amino-acid degradation; L-threonine degradation via propanoate pathway; propanoate from L-threonine: step 4/4. In terms of biological role, catalyzes the conversion of propionyl phosphate and ADP to propionate and ATP. This is Propionate kinase from Escherichia coli O6:H1 (strain CFT073 / ATCC 700928 / UPEC).